Reading from the N-terminus, the 551-residue chain is Cleavage and polyadenylation specificity factor subunit 6 (551 aa).

Positions 81 to 161 (IALYIGNLTW…QNPVVTPCNK (81 aa)) constitute an RRM domain. Threonine 157 bears the Phosphothreonine mark. Over residues 169–180 (MQSRKTTQSGQM) the composition is skewed to polar residues. Disordered stretches follow at residues 169–410 (MQSR…TPLS) and 477–551 (LHGI…YRHR). 3 stretches are compositionally biased toward pro residues: residues 237-265 (TRPP…PLAG), 285-366 (GQPP…PPPA), and 377-388 (GPPPTDPYGRPP). Basic and acidic residues-rich tracts occupy residues 389–404 (PYDR…EMDA) and 489–503 (SRRE…SRSR). Serine 494, serine 500, serine 511, serine 513, and serine 525 each carry phosphoserine. Positions 504–514 (EKSRRHKSRSR) are enriched in basic residues. Residues 515 to 551 (DRHDDYYRERSRERERHRDRDRDRDRERDREREYRHR) are compositionally biased toward basic and acidic residues.

It belongs to the RRM CPSF6/7 family. Component of the cleavage factor Im (CFIm) complex.

Its subcellular location is the nucleus. The protein resides in the nucleoplasm. It is found in the nucleus speckle. It localises to the cytoplasm. Functionally, component of the cleavage factor Im (CFIm) complex that functions as an activator of the pre-mRNA 3'-end cleavage and polyadenylation processing required for the maturation of pre-mRNA into functional mRNAs. CFIm contributes to the recruitment of multiprotein complexes on specific sequences on the pre-mRNA 3'-end, so called cleavage and polyadenylation signals (pA signals). Most pre-mRNAs contain multiple pA signals, resulting in alternative cleavage and polyadenylation (APA) producing mRNAs with variable 3'-end formation. The CFIm complex acts as a key regulator of cleavage and polyadenylation site choice during APA through its binding to 5'-UGUA-3' elements localized in the 3'-untranslated region (UTR) for a huge number of pre-mRNAs. Plays a role in mRNA export. The protein is Cleavage and polyadenylation specificity factor subunit 6 of Gallus gallus (Chicken).